Reading from the N-terminus, the 482-residue chain is PAN domain-containing protein At5g03700 (482 aa).

A signal peptide spans Met-1 to Ala-31. A PAN domain is found at Cys-330 to Glu-411. Disulfide bonds link Cys-363-Cys-385 and Cys-367-Cys-373. The chain crosses the membrane as a helical span at residues Gly-425–Phe-445.

The protein resides in the membrane. This chain is PAN domain-containing protein At5g03700, found in Arabidopsis thaliana (Mouse-ear cress).